Consider the following 169-residue polypeptide: Small ribosomal subunit protein uS5 (169 aa).

In terms of domain architecture, S5 DRBM spans 13–76 (LVEKLVSVRR…EKARRNMKDV (64 aa)).

It belongs to the universal ribosomal protein uS5 family. Part of the 30S ribosomal subunit. Contacts proteins S4 and S8.

Functionally, with S4 and S12 plays an important role in translational accuracy. Its function is as follows. Located at the back of the 30S subunit body where it stabilizes the conformation of the head with respect to the body. In Hydrogenovibrio crunogenus (strain DSM 25203 / XCL-2) (Thiomicrospira crunogena), this protein is Small ribosomal subunit protein uS5.